A 286-amino-acid chain; its full sequence is Acetylglutamate kinase (286 aa).

Substrate-binding positions include 69-70 (GG), Arg-91, and Asn-185.

The protein belongs to the acetylglutamate kinase family. ArgB subfamily.

It is found in the cytoplasm. It catalyses the reaction N-acetyl-L-glutamate + ATP = N-acetyl-L-glutamyl 5-phosphate + ADP. Its pathway is amino-acid biosynthesis; L-arginine biosynthesis; N(2)-acetyl-L-ornithine from L-glutamate: step 2/4. In terms of biological role, catalyzes the ATP-dependent phosphorylation of N-acetyl-L-glutamate. The chain is Acetylglutamate kinase from Chlorobium chlorochromatii (strain CaD3).